The sequence spans 386 residues: MAAVETRECETEGCHSEAKLQCPTCIKLGIQGSYFCSQECFKGSWATHKLLHKKAKEDKTNDEEKNCVEKEVNTDPWPGYRYTGKLRPYYPLTPMRLVPSNIQRPDYADHPLGMSESEQTMKGTSQIKILNAEEIEGMRVVCKLAREVLDIAAMMVKPGVTTEEIDHAVHLACTARNCYPSPLNYYNFPKSCCTSVNEVICHGIPDRRHLQEGDILNIDITVYHNGYHGDLNETFFVGEVDEGAKRLVQTTYECLMQAIDSVKPGIRYRELGNIIQKHAQANGFSVVRSYCGHGIHKLFHTAPNVPHYAKNKAVGVMKPGHVFTIEPMICEGGWQDETWPDGWTAVTRDGKRSAQFEHTLLVTETGCEILTRRLEDNGRAHFLSQM.

The segment at 6 to 59 (TRECETEGCHSEAKLQCPTCIKLGIQGSYFCSQECFKGSWATHKLLHKKAKEDK) adopts a C6H2-type zinc-finger fold. Residues cysteine 9, cysteine 14, cysteine 22, cysteine 25, cysteine 36, cysteine 40, histidine 48, and histidine 52 each contribute to the Zn(2+) site. Residue histidine 202 coordinates a protein. Positions 219, 230, and 293 each coordinate Zn(2+). Histidine 300 is an a protein binding site. 2 residues coordinate Zn(2+): glutamate 326 and glutamate 357.

This sequence belongs to the peptidase M24A family. Methionine aminopeptidase type 1 subfamily. In terms of assembly, associates with the 60S ribosomal subunit of the 80S translational complex. Zn(2+) serves as cofactor. Requires Co(2+) as cofactor. It depends on Mn(2+) as a cofactor. The cofactor is Fe(2+).

Its subcellular location is the cytoplasm. The enzyme catalyses Release of N-terminal amino acids, preferentially methionine, from peptides and arylamides.. Its function is as follows. Cotranslationally removes the N-terminal methionine from nascent proteins. The N-terminal methionine is often cleaved when the second residue in the primary sequence is small and uncharged (Met-Ala-, Cys, Gly, Pro, Ser, Thr, or Val). The sequence is that of Methionine aminopeptidase 1 (metap1) from Danio rerio (Zebrafish).